Reading from the N-terminus, the 281-residue chain is Nucleotide-binding protein Daro_0070 (281 aa).

Residue 8–15 (GLSGSGKS) participates in ATP binding. Residue 57–60 (DARS) coordinates GTP.

Belongs to the RapZ-like family.

Functionally, displays ATPase and GTPase activities. The sequence is that of Nucleotide-binding protein Daro_0070 from Dechloromonas aromatica (strain RCB).